Here is a 273-residue protein sequence, read N- to C-terminus: Ribosomal RNA small subunit methyltransferase A (273 aa).

S-adenosyl-L-methionine-binding residues include asparagine 18, leucine 20, glycine 45, glutamate 66, aspartate 91, and asparagine 113.

It belongs to the class I-like SAM-binding methyltransferase superfamily. rRNA adenine N(6)-methyltransferase family. RsmA subfamily.

It localises to the cytoplasm. The catalysed reaction is adenosine(1518)/adenosine(1519) in 16S rRNA + 4 S-adenosyl-L-methionine = N(6)-dimethyladenosine(1518)/N(6)-dimethyladenosine(1519) in 16S rRNA + 4 S-adenosyl-L-homocysteine + 4 H(+). Specifically dimethylates two adjacent adenosines (A1518 and A1519) in the loop of a conserved hairpin near the 3'-end of 16S rRNA in the 30S particle. May play a critical role in biogenesis of 30S subunits. This chain is Ribosomal RNA small subunit methyltransferase A, found in Salmonella schwarzengrund (strain CVM19633).